A 592-amino-acid chain; its full sequence is Dictomallein-1 (592 aa).

A signal peptide spans 1–19 (MKILIILLVFLNLITNINC). The Peptidase M66 domain maps to 140–402 (PNIGHETNLN…QNYFKDSIIY (263 aa)). Residue His-294 coordinates Zn(2+). The active site involves Glu-295. Zn(2+) is bound by residues His-298 and His-304.

Belongs to the dictomallein family. The cofactor is Zn(2+).

The protein localises to the secreted. In Dictyostelium discoideum (Social amoeba), this protein is Dictomallein-1 (dtmlA).